The following is a 172-amino-acid chain: Large ribosomal subunit protein uL10 (172 aa).

Belongs to the universal ribosomal protein uL10 family. In terms of assembly, part of the ribosomal stalk of the 50S ribosomal subunit. The N-terminus interacts with L11 and the large rRNA to form the base of the stalk. The C-terminus forms an elongated spine to which L12 dimers bind in a sequential fashion forming a multimeric L10(L12)X complex.

Functionally, forms part of the ribosomal stalk, playing a central role in the interaction of the ribosome with GTP-bound translation factors. The sequence is that of Large ribosomal subunit protein uL10 from Methylorubrum populi (strain ATCC BAA-705 / NCIMB 13946 / BJ001) (Methylobacterium populi).